The primary structure comprises 207 residues: Guanylate kinase (207 aa).

Positions 4–184 (GTLYIVSAPS…ALTDLKTIIR (181 aa)) constitute a Guanylate kinase-like domain. ATP is bound at residue 11 to 18 (APSGAGKS).

It belongs to the guanylate kinase family.

The protein resides in the cytoplasm. The catalysed reaction is GMP + ATP = GDP + ADP. In terms of biological role, essential for recycling GMP and indirectly, cGMP. The polypeptide is Guanylate kinase (Escherichia coli O6:K15:H31 (strain 536 / UPEC)).